The following is a 174-amino-acid chain: tRNA (cytidine(56)-2'-O)-methyltransferase (174 aa).

S-adenosyl-L-methionine contacts are provided by residues Leu-80, 105-109, and 123-130; these read GAEKV and ISNQPHSE.

The protein belongs to the aTrm56 family. In terms of assembly, homodimer.

It is found in the cytoplasm. It carries out the reaction cytidine(56) in tRNA + S-adenosyl-L-methionine = 2'-O-methylcytidine(56) in tRNA + S-adenosyl-L-homocysteine + H(+). Functionally, specifically catalyzes the AdoMet-dependent 2'-O-ribose methylation of cytidine at position 56 in tRNAs. In Metallosphaera sedula (strain ATCC 51363 / DSM 5348 / JCM 9185 / NBRC 15509 / TH2), this protein is tRNA (cytidine(56)-2'-O)-methyltransferase.